The primary structure comprises 136 residues: Histone H3 (136 aa).

The tract at residues 1–43 is disordered; the sequence is MARTKQTARKSTGGKAPRKQLATKAARKSAPASGGVKKPHRYR. Residues K5 and K10 each carry the N6,N6,N6-trimethyllysine; alternate modification. 2 positions are modified to N6,N6-dimethyllysine; alternate: K5 and K10. N6-acetyllysine; alternate occurs at positions 5 and 10. Position 5 is an N6-methyllysine; alternate (K5). At S11 the chain carries Phosphoserine. K15 and K24 each carry N6-acetyllysine. Position 28 is an N6,N6,N6-trimethyllysine; alternate (K28). The residue at position 28 (K28) is an N6,N6-dimethyllysine; alternate. N6-methyllysine; alternate is present on K28. Position 29 is a phosphoserine (S29). N6,N6,N6-trimethyllysine; alternate is present on K37. K37 is subject to N6,N6-dimethyllysine; alternate. K37 carries the post-translational modification N6-methyllysine; alternate. At K80 the chain carries N6-methyllysine.

Belongs to the histone H3 family. The nucleosome is a histone octamer containing two molecules each of H2A, H2B, H3 and H4 assembled in one H3-H4 heterotetramer and two H2A-H2B heterodimers. The octamer wraps approximately 147 bp of DNA. Interacts (via N-terminal tail mono-acetylated on Lys-15) with swsn-4 (via Bromo domain); the interaction is direct. In terms of processing, phosphorylated at Ser-11 and Ser-29 during M phase. Phosphorylation of Ser-11 requires air-2 but not air-1. Dephosphorylated by gsp-1 and/or gsp-2 during chromosome segregation. Post-translationally, acetylation is generally linked to gene activation. Methylation at Lys-5 is linked to gene activation and is absent from male inactive X chromosome chromatin. Methylation at Lys-10 is linked to gene repression and is enriched in male inactive X chromosome chromatin. Methylation at Lys-37 occurs on the entire length of autosomes during meiotic prophase. Trimethylation at Lys-10 and Lys-37 is specifically antagonized by jmjd-2. Dimethylation and trimethylation at Lys-28 occurs in all nuclei. The mes-2-mes-3-mes-6 complex may be responsible for Lys-28 methylation in most of the germline and in the early embryo.

The protein localises to the nucleus. It is found in the chromosome. In terms of biological role, core component of nucleosome. Nucleosomes wrap and compact DNA into chromatin, limiting DNA accessibility to the cellular machineries which require DNA as a template. Histones thereby play a central role in transcription regulation, DNA repair, DNA replication and chromosomal stability. DNA accessibility is regulated via a complex set of post-translational modifications of histones, also called histone code, and nucleosome remodeling. This Caenorhabditis elegans protein is Histone H3 (his-2).